A 586-amino-acid polypeptide reads, in one-letter code: Phosphomethylpyrimidine synthase (586 aa).

The tract at residues 1–59 is disordered; sequence MKQSVSAEQIELKSSLPGSKKVYVDGPREGMKVPMREIEQSDTNGVPNPPIRVYDTSGP. Residues 22 to 39 are compositionally biased toward basic and acidic residues; it reads VYVDGPREGMKVPMREIE. Substrate contacts are provided by residues asparagine 193, methionine 222, tyrosine 251, histidine 287, 307–309, 348–351, and glutamate 387; these read SRG and DGLR. Histidine 391 provides a ligand contact to Zn(2+). Tyrosine 414 is a binding site for substrate. Histidine 455 lines the Zn(2+) pocket. Residues cysteine 535, cysteine 538, and cysteine 543 each contribute to the [4Fe-4S] cluster site.

Belongs to the ThiC family. The cofactor is [4Fe-4S] cluster.

It catalyses the reaction 5-amino-1-(5-phospho-beta-D-ribosyl)imidazole + S-adenosyl-L-methionine = 4-amino-2-methyl-5-(phosphooxymethyl)pyrimidine + CO + 5'-deoxyadenosine + formate + L-methionine + 3 H(+). The protein operates within cofactor biosynthesis; thiamine diphosphate biosynthesis. Functionally, catalyzes the synthesis of the hydroxymethylpyrimidine phosphate (HMP-P) moiety of thiamine from aminoimidazole ribotide (AIR) in a radical S-adenosyl-L-methionine (SAM)-dependent reaction. This chain is Phosphomethylpyrimidine synthase, found in Bacillus cereus (strain ATCC 10987 / NRS 248).